Here is a 411-residue protein sequence, read N- to C-terminus: ATP-dependent Clp protease ATP-binding subunit ClpX (411 aa).

Residues 1–51 (MAKKKDEEYCSFCGMPRTQVNLMLEGVHAHICDECALRAGEVVREALQKFK) enclose the ClpX-type ZB domain. Residues C10, C13, C32, and C35 each contribute to the Zn(2+) site. 119–126 (PTGTGKTL) contacts ATP.

It belongs to the ClpX chaperone family. As to quaternary structure, component of the ClpX-ClpP complex. Forms a hexameric ring that, in the presence of ATP, binds to fourteen ClpP subunits assembled into a disk-like structure with a central cavity, resembling the structure of eukaryotic proteasomes.

Functionally, ATP-dependent specificity component of the Clp protease. It directs the protease to specific substrates. Can perform chaperone functions in the absence of ClpP. The sequence is that of ATP-dependent Clp protease ATP-binding subunit ClpX from Porphyromonas gingivalis (strain ATCC 33277 / DSM 20709 / CIP 103683 / JCM 12257 / NCTC 11834 / 2561).